Consider the following 303-residue polypeptide: CDAN1-interacting nuclease 1 (303 aa).

The protein localises to the nucleus. Its subcellular location is the cytoplasm. May play a role in erythroid cell differentiation. The protein is CDAN1-interacting nuclease 1 (cdin1) of Xenopus tropicalis (Western clawed frog).